The chain runs to 1267 residues: MSQPSDIVKVIVALPTLSKKPQQGKKKKSKELEEITLQFRKDSKLQNVLDFLSIAPATKYFTNYNLKNSTGDLLLSSEEKTLRELCSDKDEYKVALELKPYNQYQALKHVLTSRDFFGFASETEDGLSNVAVSTGSKFYKLPLKEIKEKSPENEDKDTENKKPTSMNVTDEEKVEFNHMVHGLFETLKKEKKVLLKDLMNTDTSVVTPCLRSINFSPYNPVPAFYRTKGHLFYLQIVTLEGESLQVTAIPSGFYINKSTTSKFDPSPKENDGHVDTVHYTLYDLLASSSKNFVTHISSLEKKFDDLESVTYVRPACTTLNKPWLIPAIPTNGPDYLRTQIDSFNFEPERNFNDEFQSIKEIPTNTLQARIESERIFAKLTHEFTINATKGAMDILYGNGTAMNPDSPLEEQIFLKNNIFYSFVGDLNQTYADKGGDEAAIASANQDLRTLNMLTRLNLPNIHHLLTTIVDFGGKRILAQTPVPGLLSPMGVKITTNEETKEETVSELSSDICVKYGLDENEKKVVFNEEFDEILNDQFAKSFHLKKHTIQGTELVFSSQSKGIVGSDKRHYILDLANTYPLDVEFAKENFDDVKEASKKYPHRQTLIRPELVEKWWATKIENDKVELVKAYEENLYSYNPDAYQVPGVEDETVVEISKYLNEEIIPNVVQDYLNGNIISPYNGEHLADTFHKNGVNMRYLGKFANLVKEELRKQEEAHEAKLAQVIVDNKEYEEWEKSYLQKIETMIKERQAKINKLVQEGKEVPKELTEDLKLDDNEIKKPSTEKPVVVSYDELVPLIKTAELEIISRSLKHILRKYSRSLPPIVIPALISFVFNLLFGTTYNPAPAVESVDPLYPVDQYEFKNLTHDTLLKEIEQEAVVRYRYELEGDWFAEHELYPFTLIRSICNKFGVQLLNKDYFFSTEQLEEYKQSLDKKSRAKYVAPLTTFSVSDLTVIPKIKAIDYSSPISEELWSQGASIINENQKDGLTLLAQSIGFKEEVNSILHSSVAEKYLTLSTIYNKLGLNAEAIAFCRKSCAIYERVCGVDSFELLRALTNLATLEFANESPYNVALIYQRIIQTVSGYGLDKIHHPIFTNIFNYLEQLSLGVQDAKLAVEVLKSLGDFLVSIDGTESLPYAYIKSKLGNLLAADNRFSDALNQIKVAERIFTKELGTNHGSTAQARQWVDGLTNLIKDVNQKKQLQQDQTAASGLKQQPQKSKSGHNKKETTNPDLADKSVDELLSFIEGEDGKSSKTTKKSKSKGKNKK.

7 TPR repeats span residues 64–102 (YNLKNSTGDLLLSSEEKTLRELCSDKDEYKVALELKPYN), 420–453 (YSFVGDLNQTYADKGGDEAAIASANQDLRTLNML), 716–749 (EAHEAKLAQVIVDNKEYEEWEKSYLQKIETMIKE), 795–830 (LVPLIKTAELEIISRSLKHILRKYSRSLPPIVIPAL), 904–939 (RSICNKFGVQLLNKDYFFSTEQLEEYKQSLDKKSRA), 1010–1043 (AEKYLTLSTIYNKLGLNAEAIAFCRKSCAIYERV), and 1138–1171 (AYIKSKLGNLLAADNRFSDALNQIKVAERIFTKE). The Clu domain maps to 329-586 (PTNGPDYLRT…NTYPLDVEFA (258 aa)). Polar residues predominate over residues 1203–1219 (QQDQTAASGLKQQPQKS). A disordered region spans residues 1203 to 1267 (QQDQTAASGL…KSKSKGKNKK (65 aa)). Residues 1224–1239 (NKKETTNPDLADKSVD) show a composition bias toward basic and acidic residues. Over residues 1254-1267 (KTTKKSKSKGKNKK) the composition is skewed to basic residues.

It belongs to the CLU family. May associate with the eukaryotic translation initiation factor 3 (eIF-3) complex.

Its subcellular location is the cytoplasm. Functionally, mRNA-binding protein involved in proper cytoplasmic distribution of mitochondria. This is Clustered mitochondria protein homolog from Candida glabrata (strain ATCC 2001 / BCRC 20586 / JCM 3761 / NBRC 0622 / NRRL Y-65 / CBS 138) (Yeast).